The primary structure comprises 462 residues: Acetate--CoA ligase [ADP-forming] I subunit alpha (462 aa).

This sequence belongs to the acetate CoA ligase alpha subunit family. Heterotetramer of two alpha and two beta subunits.

Its subcellular location is the cytoplasm. It catalyses the reaction acetate + ATP + CoA = acetyl-CoA + ADP + phosphate. Activity is dependent on magnesium. In terms of biological role, catalyzes the reversible formation of acetate and ATP from acetyl-CoA by using ADP and phosphate. Can use other substrates such as isobutyryl-CoA, propionyl-CoA and butyryl-CoA, but not indoleacetyl-CoA, phenylacetyl-CoA or succinyl-CoA. Seems to be involved primarily in the conversion of acetyl-CoA to acetate. Participates in the degradation of branched-chain amino acids via branched-chain-acyl-CoA esters. This Pyrococcus furiosus (strain ATCC 43587 / DSM 3638 / JCM 8422 / Vc1) protein is Acetate--CoA ligase [ADP-forming] I subunit alpha.